A 377-amino-acid chain; its full sequence is MAKKDYYQILGIPKSAEEREIKKAYKKLAMKYHPDRNQGDKTAEGKFKEIKEAYEILINEEKRSAYDQYGHAAFENGQSNSTYSTFTNSADFSDIFGDVFGDIFGGNRTQRAKKGADLCYNMEITLEEAVKGIKKEIQIPTLQKCKTCYGSGTRTGTKPRSCSTCHGKGQIHIRKGFFTVQQSCPTCHGKGTIIADPCNLCHGQGRVETYKILSVKIPPGLDTNDRIRLNNEGEAGANGAQSGDLYVQITVKKHPIFEREGNNLYCEVPINFTMAALGGEIEVPTLDGRVKLKIPYETQSGKLFRIRGRGVKSVQNRNQGDLLCRVVVETPVNLNEQQKNLLHELGNSFHGFRGEKNSPRSKRFFDGVKRFFDDLTR.

A J domain is found at 5–70; that stretch reads DYYQILGIPK…EKRSAYDQYG (66 aa). A CR-type zinc finger spans residues 132 to 210; the sequence is GIKKEIQIPT…CHGQGRVETY (79 aa). Positions 145, 148, 162, 165, 184, 187, 198, and 201 each coordinate Zn(2+). 4 CXXCXGXG motif repeats span residues 145–152, 162–169, 184–191, and 198–205; these read CKTCYGSG, CSTCHGKG, CPTCHGKG, and CNLCHGQG.

It belongs to the DnaJ family. In terms of assembly, homodimer. The cofactor is Zn(2+).

The protein resides in the cytoplasm. Functionally, participates actively in the response to hyperosmotic and heat shock by preventing the aggregation of stress-denatured proteins and by disaggregating proteins, also in an autonomous, DnaK-independent fashion. Unfolded proteins bind initially to DnaJ; upon interaction with the DnaJ-bound protein, DnaK hydrolyzes its bound ATP, resulting in the formation of a stable complex. GrpE releases ADP from DnaK; ATP binding to DnaK triggers the release of the substrate protein, thus completing the reaction cycle. Several rounds of ATP-dependent interactions between DnaJ, DnaK and GrpE are required for fully efficient folding. Also involved, together with DnaK and GrpE, in the DNA replication of plasmids through activation of initiation proteins. The chain is Chaperone protein DnaJ from Buchnera aphidicola subsp. Acyrthosiphon pisum (strain Tuc7).